Here is a 331-residue protein sequence, read N- to C-terminus: MAIPSNRDQLALSNGSHPEEYKIAALVFYSCIFLIGLLVNVTALWVFSCTTKKRTTVTIYMMNVALLDLVFILSLPFRMFYYAKGEWPFGDYFCHILGALVVFYPSLALWLLALISADRYMAIVQPKYAKELKNTGKAVLACVGVWIMTLTTTVPLLLLDEDPDKASSPATCLKISDIIHLKAVNVLNFTRLIFFFLIPLFIMIGCYVVIIHSLLRGQTSKLKPKVKEKSIRIIVTLLLQVLACFVPFHICFALLMLQGEENSYSPWGAFTTFLMNLSTCLDVVLYYIVSKQFQARVISVMLYRNYLRSVRRKSVRSGSLRSLSNMNSEML.

At 1–26 (MAIPSNRDQLALSNGSHPEEYKIAAL) the chain is on the extracellular side. N-linked (GlcNAc...) asparagine glycosylation occurs at Asn14. Residues 27–47 (VFYSCIFLIGLLVNVTALWVF) form a helical membrane-spanning segment. Residues 48-56 (SCTTKKRTT) are Cytoplasmic-facing. The helical transmembrane segment at 57–77 (VTIYMMNVALLDLVFILSLPF) threads the bilayer. Residues 78–95 (RMFYYAKGEWPFGDYFCH) are Extracellular-facing. Cysteines 94 and 172 form a disulfide. A helical transmembrane segment spans residues 96-116 (ILGALVVFYPSLALWLLALIS). Over 117–138 (ADRYMAIVQPKYAKELKNTGKA) the chain is Cytoplasmic. A helical transmembrane segment spans residues 139 to 159 (VLACVGVWIMTLTTTVPLLLL). The Extracellular portion of the chain corresponds to 160 to 191 (DEDPDKASSPATCLKISDIIHLKAVNVLNFTR). N-linked (GlcNAc...) asparagine glycosylation occurs at Asn188. A helical membrane pass occupies residues 192-212 (LIFFFLIPLFIMIGCYVVIIH). The Cytoplasmic segment spans residues 213–236 (SLLRGQTSKLKPKVKEKSIRIIVT). A helical transmembrane segment spans residues 237–257 (LLLQVLACFVPFHICFALLML). At 258 to 268 (QGEENSYSPWG) the chain is on the extracellular side. The chain crosses the membrane as a helical span at residues 269 to 289 (AFTTFLMNLSTCLDVVLYYIV). Residues 290–331 (SKQFQARVISVMLYRNYLRSVRRKSVRSGSLRSLSNMNSEML) are Cytoplasmic-facing. Position 322 is a phosphoserine (Ser322).

The protein belongs to the G-protein coupled receptor 1 family. As to expression, expressed in testis, spleen and brain (at protein level).

The protein resides in the cell membrane. It is found in the cytoplasmic vesicle membrane. In terms of biological role, g protein-coupled receptor (GPCR) that plays a role in diverse physiological processes particularly within the immune and nervous systems. Becomes active when triggered by various endogenous ligands including endocannabinoid N-arachidonyl glycine (NAGly), delta-9-tetrahydrocannabinol or resolvin D2/RvD2 derived from the omega-3 fatty acid docosahexaenoic acid (DHA). Upon RvD2 binding, facilitates the resolution of inflammation, aiding in tissue repair and homeostasis. Mechanistically, RvD2 ligation initiates Galphas protein coupling, activation of cAMP-PKA signaling pathway and phosphorylation of STAT3, leading to RvD2-stimulated macrophage phagocytosis. Mediates NAGly-induced process of reorganization of actin filaments and induction of acrosomal exocytosis. Activation by N-arachidonoyl glycine (NAGly) can also induce apoptosis in macrophages. Plays a role in homeostasis of CD8+ subsets of intraepithelial lymphocytes (IELs) (CD8alphaalpha and CD8alphabeta IELs) in small intestine by supporting preferential migration of CD8alphaalpha T-cells to intraepithelial compartment over lamina propria compartment, and by mediating their reconstitution into small intestine after bone marrow transplant. Participates also in hypotensive responses, mediating reduction in intraocular and blood pressure. The chain is N-arachidonyl glycine receptor from Rattus norvegicus (Rat).